Consider the following 109-residue polypeptide: Phycoerythrin alpha-2 subunit (109 aa).

(2R,3E)-phycoerythrobilin-binding residues include Asp52, Ser53, Glu63, Arg64, Cys67, Thr72, Lys74, Ala75, and Lys84.

The protein belongs to the phycoerythrin family. As to quaternary structure, heterotetramer of 2 different alpha chains and 2 identical beta chains which form 2 alpha-beta heterodimers within the heterotetramer. The two alpha-beta heterodimers are rotated to an open configuration in contrast to the closed configuration found in other cryptophyte species due to the insertion of a single amino acid, Asp-65, in a conserved region of the alpha chain. In the open form, the central chromophores are not in physical contact but are separated by a water-filled channel. Post-translationally, contains three phycoerythrobilin chromophores with binding mediated by both the alpha and beta subunits.

It is found in the plastid. It localises to the chloroplast thylakoid membrane. Light-harvesting photosynthetic tetrapyrrole chromophore-protein from the phycobiliprotein complex. The polypeptide is Phycoerythrin alpha-2 subunit (Hemiselmis andersenii (Cryptophyte alga)).